The following is a 346-amino-acid chain: MSESYKNAGVDIEAGYEAVKRMKKHVERTKRIGAMGGLGGFGGMFDLSELPYKQPVLISGTDGVGTKLKLAFAMDKHDTIGIDAVAMCVNDVLAQGAEPLFFLDYLAVGKADPVKIEEIVKGVAEGCVQSGSALVGGETAEMPGLYTEDEYDIAGFSVGAAEKDGIVTGENISEGHLLIGLSSSGLHSNGFSLVRKVLLEDAGLNLDETYAPFERPLGEELLEPTKIYVKPVLEAVKSGKIAGMAHVTGGGFIENLPRMMPDGLGVEIDIGSWPVPPIFPFIQEKGGLKSEEMFNVFNMGIGFVLAVKEEDMTDVIQTLENNGEKAYLIGRVKAGSGVVFGGAGLS.

It belongs to the AIR synthase family.

It is found in the cytoplasm. It catalyses the reaction 2-formamido-N(1)-(5-O-phospho-beta-D-ribosyl)acetamidine + ATP = 5-amino-1-(5-phospho-beta-D-ribosyl)imidazole + ADP + phosphate + H(+). It functions in the pathway purine metabolism; IMP biosynthesis via de novo pathway; 5-amino-1-(5-phospho-D-ribosyl)imidazole from N(2)-formyl-N(1)-(5-phospho-D-ribosyl)glycinamide: step 2/2. The sequence is that of Phosphoribosylformylglycinamidine cyclo-ligase from Bacillus licheniformis (strain ATCC 14580 / DSM 13 / JCM 2505 / CCUG 7422 / NBRC 12200 / NCIMB 9375 / NCTC 10341 / NRRL NRS-1264 / Gibson 46).